The primary structure comprises 338 residues: Fructose-1,6-bisphosphatase class 1 1 (338 aa).

Mg(2+) is bound by residues E91, D113, L115, and D116. Substrate contacts are provided by residues 116–119 (DGSS), N208, and K274. E280 provides a ligand contact to Mg(2+).

Belongs to the FBPase class 1 family. As to quaternary structure, homotetramer. Mg(2+) is required as a cofactor.

It localises to the cytoplasm. The catalysed reaction is beta-D-fructose 1,6-bisphosphate + H2O = beta-D-fructose 6-phosphate + phosphate. Its pathway is carbohydrate biosynthesis; gluconeogenesis. The protein is Fructose-1,6-bisphosphatase class 1 1 of Cupriavidus necator (strain ATCC 17699 / DSM 428 / KCTC 22496 / NCIMB 10442 / H16 / Stanier 337) (Ralstonia eutropha).